The sequence spans 250 residues: Agamous-like MADS-box protein AGL8 homolog (250 aa).

The MADS-box domain maps to 3–57 (RGRVQLKRIENKINRQVTFSKRRSGLLKKAHEISVLCDAEVGLIVFSTKGKLFEY). A K-box domain is found at 88 to 178 (PGSWTLENAK…SKKVKEREKE (91 aa)). Disordered stretches follow at residues 162-191 (QEQNNQLSKKVKEREKEVEQQNQWDQQNHE) and 206-241 (PHLGEASQNTNVVDNGEVEGGNSSQXQGAANNTVMP). Over residues 171–180 (KVKEREKEVE) the composition is skewed to basic and acidic residues. Composition is skewed to polar residues over residues 181–191 (QQNQWDQQNHE) and 226–240 (GNSSQXQGAANNTVM).

The protein resides in the nucleus. Functionally, probable transcription factor. The protein is Agamous-like MADS-box protein AGL8 homolog (SCM1) of Solanum commersonii (Commerson's wild potato).